The following is a 55-amino-acid chain: MKFIIVLILISVLIATIVPVNEAQTQCQSVRDCQQYCLTPDRCSYGTCYCKTTGK.

Residues 1-23 form the signal peptide; the sequence is MKFIIVLILISVLIATIVPVNEA. Position 24 is a pyrrolidone carboxylic acid (Gln-24). 3 disulfide bridges follow: Cys-27-Cys-43, Cys-33-Cys-48, and Cys-37-Cys-50. A Threonine amide modification is found at Thr-53.

Belongs to the short scorpion toxin superfamily. Potassium channel inhibitor family. Alpha-KTx 17 subfamily. As to expression, expressed by the venom gland.

It is found in the secreted. Its function is as follows. Blocker of potassium channels, which inhibits both the delayed rectifier and fast transient potassium current. The inhibition is reversible and voltage-independent. It causes a depolarizing shift of the steady-state activation curve of the currents, without changing their steady-state inactivation behavior. This chain is Potassium channel toxin alpha-KTx 17.1, found in Olivierus martensii (Manchurian scorpion).